A 128-amino-acid chain; its full sequence is Cytochrome c-type biogenesis protein CcmE (128 aa).

The Cytoplasmic segment spans residues 1 to 8 (MQKRVRNR). The helical; Signal-anchor for type II membrane protein transmembrane segment at 9 to 29 (LITIIICFCSACLGISIILYN) threads the bilayer. Residues 30–128 (LEKNIVFFLP…KHDENYRPPQ (99 aa)) are Extracellular-facing. Positions 120 and 124 each coordinate heme.

It belongs to the CcmE/CycJ family.

It localises to the cell membrane. In terms of biological role, heme chaperone required for the biogenesis of c-type cytochromes. Transiently binds heme delivered by CcmC and transfers the heme to apo-cytochromes in a process facilitated by CcmF and CcmH. The sequence is that of Cytochrome c-type biogenesis protein CcmE from Rickettsia africae (strain ESF-5).